The following is a 505-amino-acid chain: SusD-like protein P2 (505 aa).

The N-terminal stretch at 1–17 is a signal peptide; it reads MKKYKITFIVLLLTLVG. Cysteine 18 is lipidated: N-palmitoyl cysteine. Cysteine 18 carries the S-diacylglycerol cysteine lipid modification.

This sequence belongs to the SusD family.

It is found in the cell outer membrane. Its function is as follows. Polysaccharide-binding protein probably involved in ulvan degradation. Ulvan is the main polysaccharide component of the Ulvales (green seaweed) cell wall. It is composed of disaccharide building blocks comprising 3-sulfated rhamnose (Rha3S) linked to D-glucuronic acid (GlcA), L-iduronic acid (IduA), or D-xylose (Xyl). The SusD-like protein may mediate ulvan oligomer-binding before transport in the periplasm for further degradation. The protein is SusD-like protein P2 of Formosa agariphila (strain DSM 15362 / KCTC 12365 / LMG 23005 / KMM 3901 / M-2Alg 35-1).